The primary structure comprises 235 residues: uncharacterized protein (235 aa).

7 helical membrane-spanning segments follow: residues Val2–Leu22, Met34–Ala54, Leu56–Glu76, Phe102–Gly122, Met147–Ile167, Ile178–Leu198, and Met210–Trp230.

The protein resides in the cell membrane. This is an uncharacterized protein from Escherichia coli (strain K12).